The following is a 132-amino-acid chain: Glycine cleavage system H protein (132 aa).

One can recognise a Lipoyl-binding domain in the interval 24–106; the sequence is TVRVGLTDFA…YGAGWLLDVH (83 aa). Lys-65 is subject to N6-lipoyllysine.

The protein belongs to the GcvH family. In terms of assembly, the glycine cleavage system is composed of four proteins: P, T, L and H. (R)-lipoate is required as a cofactor.

Functionally, the glycine cleavage system catalyzes the degradation of glycine. The H protein shuttles the methylamine group of glycine from the P protein to the T protein. The sequence is that of Glycine cleavage system H protein from Mycobacterium leprae (strain Br4923).